Reading from the N-terminus, the 190-residue chain is ATP synthase subunit delta (190 aa).

It belongs to the ATPase delta chain family. As to quaternary structure, F-type ATPases have 2 components, F(1) - the catalytic core - and F(0) - the membrane proton channel. F(1) has five subunits: alpha(3), beta(3), gamma(1), delta(1), epsilon(1). F(0) has three main subunits: a(1), b(2) and c(10-14). The alpha and beta chains form an alternating ring which encloses part of the gamma chain. F(1) is attached to F(0) by a central stalk formed by the gamma and epsilon chains, while a peripheral stalk is formed by the delta and b chains.

It localises to the cell inner membrane. Its function is as follows. F(1)F(0) ATP synthase produces ATP from ADP in the presence of a proton or sodium gradient. F-type ATPases consist of two structural domains, F(1) containing the extramembraneous catalytic core and F(0) containing the membrane proton channel, linked together by a central stalk and a peripheral stalk. During catalysis, ATP synthesis in the catalytic domain of F(1) is coupled via a rotary mechanism of the central stalk subunits to proton translocation. Functionally, this protein is part of the stalk that links CF(0) to CF(1). It either transmits conformational changes from CF(0) to CF(1) or is implicated in proton conduction. The chain is ATP synthase subunit delta from Beijerinckia indica subsp. indica (strain ATCC 9039 / DSM 1715 / NCIMB 8712).